A 545-amino-acid polypeptide reads, in one-letter code: Hyaluronidase PH-20 (545 aa).

Residues 1–35 (MGVLKFKHIFFGSAVELSGVFQIVFIFLLIPCCLT) form the signal peptide. Intrachain disulfides connect Cys60/Cys355 and Cys224/Cys239. Residue Asn82 is glycosylated (N-linked (GlcNAc...) asparagine). Catalysis depends on Glu148, which acts as the Proton donor. Asn180 is a glycosylation site (N-linked (GlcNAc...) asparagine). Residue Asn372 is glycosylated (N-linked (GlcNAc...) asparagine). 3 cysteine pairs are disulfide-bonded: Cys380/Cys391, Cys385/Cys439, and Cys441/Cys468.

It belongs to the glycosyl hydrolase 56 family. As to expression, testis.

The protein localises to the cell membrane. It catalyses the reaction Random hydrolysis of (1-&gt;4)-linkages between N-acetyl-beta-D-glucosamine and D-glucuronate residues in hyaluronate.. Functionally, involved in sperm-egg adhesion. Upon fertilization sperm must first penetrate a layer of cumulus cells that surrounds the egg before reaching the zona pellucida. The cumulus cells are embedded in a matrix containing hyaluronic acid which is formed prior to ovulation. This protein aids in penetrating the layer of cumulus cells by digesting hyaluronic acid. This chain is Hyaluronidase PH-20 (SPAM1), found in Oryctolagus cuniculus (Rabbit).